Reading from the N-terminus, the 920-residue chain is Puromycin-sensitive aminopeptidase (920 aa).

Substrate-binding positions include Glu-181 and 317-321 (GAMEN). Residue His-353 coordinates Zn(2+). Glu-354 functions as the Proton acceptor in the catalytic mechanism. Residues His-357 and Glu-376 each coordinate Zn(2+). Tyr-465 is subject to 3'-nitrotyrosine. A Nuclear localization signal motif is present at residues 727 to 731 (RRRFK).

The protein belongs to the peptidase M1 family. Monomer. The cofactor is Zn(2+). In terms of tissue distribution, widely expressed. Highest expression in brain, particularly the striatum and hippocampus. Expressed in Sertoli cells.

It localises to the cytoplasm. The protein resides in the cytosol. The protein localises to the nucleus. The catalysed reaction is Release of an N-terminal amino acid, preferentially alanine, from a wide range of peptides, amides and arylamides.. With respect to regulation, strongly inhibited by bestatin, leuhistin, actinonin, amastatin, 1,10-phenanthroline, DFP, PCMBS, Zn(2+), Cd(2+), Co(2+), Cu(2+), Hg(2+), EDTA and puromycin. Not inhibited by PMSF, and only slightly inhibited by leupeptin and aprotinin. Activity is increased by Mg(2+) and Ca(2+). In terms of biological role, aminopeptidase with broad substrate specificity for several peptides. Involved in proteolytic events essential for cell growth and viability. May act as regulator of neuropeptide activity. Plays a role in the antigen-processing pathway for MHC class I molecules. Involved in the N-terminal trimming of cytotoxic T-cell epitope precursors. Digests the poly-Q peptides found in many cellular proteins. This is Puromycin-sensitive aminopeptidase (Npepps) from Mus musculus (Mouse).